A 312-amino-acid chain; its full sequence is Peroxidase (312 aa).

The first 23 residues, 1–23, serve as a signal peptide directing secretion; it reads MAMGSASCISLVVLVALATAASG. Gln24 bears the Pyrrolidone carboxylic acid mark. 4 cysteine pairs are disulfide-bonded: Cys34–Cys107, Cys67–Cys70, Cys113–Cys307, and Cys192–Cys218. His65 functions as the Proton acceptor in the catalytic mechanism. Ca(2+) contacts are provided by Asp66, Gly69, Asp71, and Ser73. Pro155 contacts substrate. His185 serves as a coordination point for heme b. Residue Thr186 participates in Ca(2+) binding. Asp231, Thr234, and Asp239 together coordinate Ca(2+). Residue Asn262 is glycosylated (N-linked (GlcNAc...) asparagine).

It belongs to the peroxidase family. Classical plant (class III) peroxidase subfamily. Ca(2+) is required as a cofactor. It depends on heme b as a cofactor. Root.

It is found in the secreted. It catalyses the reaction 2 a phenolic donor + H2O2 = 2 a phenolic radical donor + 2 H2O. Its function is as follows. Removal of H(2)O(2), oxidation of toxic reductants, biosynthesis and degradation of lignin, suberization, auxin catabolism, response to environmental stresses such as wounding, pathogen attack and oxidative stress. These functions might be dependent on each isozyme/isoform in each plant tissue. Functionally, involved in defense response to powdery meldew fungus. The sequence is that of Peroxidase from Triticum aestivum (Wheat).